The chain runs to 230 residues: Ribose-5-phosphate isomerase A (230 aa).

Substrate contacts are provided by residues 31-34 (TGST), 88-91 (DGSD), and 101-104 (KGGG). Glu-110 functions as the Proton acceptor in the catalytic mechanism. Lys-128 provides a ligand contact to substrate.

This sequence belongs to the ribose 5-phosphate isomerase family. As to quaternary structure, homodimer.

The enzyme catalyses aldehydo-D-ribose 5-phosphate = D-ribulose 5-phosphate. It participates in carbohydrate degradation; pentose phosphate pathway; D-ribose 5-phosphate from D-ribulose 5-phosphate (non-oxidative stage): step 1/1. Functionally, catalyzes the reversible conversion of ribose-5-phosphate to ribulose 5-phosphate. The polypeptide is Ribose-5-phosphate isomerase A (Lactobacillus helveticus (strain DPC 4571)).